The chain runs to 136 residues: Probable disulfide formation protein (136 aa).

Residues 7 to 26 form a helical membrane-spanning segment; it reads SYALYFAWAISCAGTLISIF. A disulfide bridge links cysteine 36 with cysteine 39. Transmembrane regions (helical) follow at residues 41–60 and 67–84; these read YQRICLFPLTVILGISAYRE and YILPQAVLGLGISIYQVF. Residues cysteine 96 and cysteine 101 are joined by a disulfide bond. The helical transmembrane segment at 109–131 threads the bilayer; it reads SYVTIPMASVVAFGAIVCLLVLT.

It belongs to the DsbB family. BdbC subfamily.

It is found in the cell inner membrane. Its function is as follows. Required for disulfide bond formation in some proteins. The chain is Probable disulfide formation protein from Chlamydia pneumoniae (Chlamydophila pneumoniae).